The primary structure comprises 56 residues: Prokaryotic ubiquitin-like protein UBact (56 aa).

The interval 1–56 (MPDQAQKTRPVGPGPSGGGEGPGSPKVEKPNTEELLKRMRKVDPDQAKRYRQRTGQ) is disordered. The segment covering 26–48 (KVEKPNTEELLKRMRKVDPDQAK) has biased composition (basic and acidic residues). Position 56 is a deamidated glutamine (glutamine 56). An Isoglutamyl lysine isopeptide (Gln-Lys) (interchain with K-? in acceptor proteins) cross-link involves residue glutamine 56.

This sequence belongs to the ubiquitin-like protein UBact family. Post-translationally, may be modified by deamidation of its C-terminal glutamine to glutamate by the adjacently encoded deamidase. This could be a prerequisite to the subsequent conjugation, as shown in the other prokaryotic ubiquitin-like protein Pup.

In terms of biological role, may function as a protein modifier covalently attached to lysine residues of substrate proteins. This may serve to target the modified proteins for degradation by proteasomes. The polypeptide is Prokaryotic ubiquitin-like protein UBact (Pedosphaera parvula (strain Ellin514)).